The primary structure comprises 386 residues: Nucleosome assembly protein 1-like 4 (386 aa).

The segment at 1–28 is disordered; the sequence is MAENSLSDGGPADSVEAAKNASNTEKLT. The residue at position 2 (alanine 2) is an N-acetylalanine. Phosphoserine is present on residues serine 5, serine 7, and serine 49. Threonine 51 is modified (phosphothreonine). Residues serine 53 and serine 54 each carry the phosphoserine modification. Threonine 58 is subject to Phosphothreonine. Residue lysine 105 is modified to N6-acetyllysine. Position 125 is a phosphoserine (serine 125). Lysine 146 is modified (N6-acetyllysine). Positions 265 to 271 match the Nuclear localization signal motif; sequence IKKKQKH. At serine 304 the chain carries Phosphoserine. The span at 339–370 shows a compositional bias: acidic residues; the sequence is AIEDDDNFEEGEEGEEEELEGDEEGEDEDDAD. A disordered region spans residues 339–386; sequence AIEDDDNFEEGEEGEEEELEGDEEGEDEDDADVNPKKEPIQPAECKQQ.

The protein belongs to the nucleosome assembly protein (NAP) family. Interacts with core (H2A, H2B, H3, H4) and linker (H1) histones. Polyglutamylated and polyglycylated. These 2 modifications occur exclusively on glutamate residues and result in either polyglutamate or polyglycine chains on the gamma-carboxyl group. Both modifications can coexist on the same protein on adjacent residues, and lowering polyglycylation levels increases polyglutamylation, and reciprocally. Polyglutamylated by TTLL4. In terms of processing, phosphorylated at the G0/G1 boundary but it is not phosphorylated in S-phase. Phosphorylated protein remains in the cytoplasm in a complex with histones during the G0/G1 transition, whereas dephosphorylation triggers its transport into the nucleus at the G1/S-boundary.

It is found in the nucleus. The protein localises to the cytoplasm. Functionally, acts as a histone chaperone in nucleosome assembly. This is Nucleosome assembly protein 1-like 4 (Nap1l4) from Rattus norvegicus (Rat).